The following is a 467-amino-acid chain: Retinoic acid receptor RXR-alpha (467 aa).

The interval 1 to 112 (MDTKHFLPLD…MNPVSSTEDI (112 aa)) is disordered. The tract at residues 1–139 (MDTKHFLPLD…GNMASFTKHI (139 aa)) is modulating domain. Lysine 4 participates in a covalent cross-link: Glycyl lysine isopeptide (Lys-Gly) (interchain with G-Cter in SUMO2). The span at 11–25 (FSTQVNSSSLNSPTG) shows a compositional bias: polar residues. Phosphoserine occurs at positions 22 and 28. Over residues 32-52 (PSLHPSLGPGIGSPLGSPGQL) the composition is skewed to low complexity. The segment covering 54–63 (SPISTLSSPI) has biased composition (polar residues). Phosphoserine; by MAPK8 and MAPK9 occurs at positions 61 and 75. Polar residues predominate over residues 83 to 109 (SVPTTPTLGFGTGSPQLNSPMNPVSST). Threonine 87 is modified (phosphothreonine; by MAPK8 and MAPK9). Lysine 113 is covalently cross-linked (Glycyl lysine isopeptide (Lys-Gly) (interchain with G-Cter in SUMO)). Serine 134 is modified (phosphoserine). Cysteine 140 and cysteine 143 together coordinate Zn(2+). Residues 140-160 (CAICGDRSSGKHYGVYSCEGC) form an NR C4-type zinc finger. The segment at residues 140 to 205 (CAICGDRSSG…RYQKCLAMGM (66 aa)) is a DNA-binding region (nuclear receptor). Residue lysine 150 is modified to N6-acetyllysine. Residues cysteine 157 and cysteine 160 each coordinate Zn(2+). The segment at 165 to 170 (KRTVRK) is nuclear localization signal. Zn(2+) is bound by residues cysteine 176, cysteine 182, cysteine 192, and cysteine 195. The NR C4-type zinc-finger motif lies at 176-200 (CRDNKDCLIDKRQRNRCQYCRYQKC). Residues 206 to 229 (KREAVQEERQRGKDRNENEVESTS) form a hinge region. The segment covering 211 to 223 (QEERQRGKDRNEN) has biased composition (basic and acidic residues). Residues 211–233 (QEERQRGKDRNENEVESTSSANE) are disordered. The 232-residue stretch at 232–463 (NEDMPVEKIL…TFLMEMLEAP (232 aa)) folds into the NR LBD domain. The residue at position 264 (serine 264) is a Phosphoserine. At serine 265 the chain carries Phosphoserine; by MAPK8 and MAPK9. 9-cis-retinoate contacts are provided by arginine 321 and alanine 332. All-trans-retinoate is bound by residues arginine 321 and alanine 332. The interval 353 to 373 (RVLTELVSKMRDMQMDKTELG) is required for nuclear export.

This sequence belongs to the nuclear hormone receptor family. NR2 subfamily. Homodimer. Heterodimer with RARA; required for ligand-dependent retinoic acid receptor transcriptional activity. Heterodimer with PPARA (via the leucine-like zipper in the LBD); the interaction is required for PPARA transcriptional activity. Heterodimerizes with PPARG. Heterodimerizes (via NR LBD) with RARB. Heterodimerizes with NR1H4; the heterodimerization enhances the binding affinity for LXXLL motifs from coactivators. Interacts with coactivator NCO6. Interacts with coactivator NCO3. Interacts with coactivator FAM120B. Interacts with coactivator PELP1, SENP6, SFPQ, DNTTIP2 and RNF8. Interacts with PRMT2. Interacts with ASXL1. Interacts with BHLHE40/DEC1, BHLHE41/DEC2, NCOR1 and NCOR2. Interacts in a ligand-dependent fashion with MED1 and NCOA1. Interacts with VDR. Interacts with EP300; the interaction is decreased by 9-cis retinoic acid. Heterodimer (via C-terminus) with NR4A1 (via DNA-binding domain); the interaction is enhanced by 9-cis retinoic acid. NR4A1 competes with EP300 for interaction with RXRA and thereby attenuates EP300 mediated acetylation of RXRA. In the absence of hormonal ligand, interacts with TACC1. Interacts ith IGFBP3. Acetylated by EP300; acetylation enhances DNA binding and transcriptional activity. Post-translationally, phosphorylated on serine and threonine residues mainly in the N-terminal modulating domain. Constitutively phosphorylated on Ser-22 in the presence or absence of ligand. Under stress conditions, hyperphosphorylated by activated JNK on Ser-61, Ser-75, Thr-87 and Ser-265. Phosphorylated on Ser-28, in vitro, by PKA. This phosphorylation is required for repression of cAMP-mediated transcriptional activity of RARA. In terms of processing, ubiquitinated by UBR5, leading to its degradation: UBR5 specifically recognizes and binds ligand-bound RXRA when it is not associated with coactivators (NCOAs). In presence of NCOAs, the UBR5-degron is not accessible, preventing its ubiquitination and degradation. Sumoylation negatively regulates transcriptional activity. Desumoylated specifically by SENP6. Expressed in macrophages (at protein level).

It is found in the nucleus. It localises to the cytoplasm. The protein localises to the mitochondrion. In terms of biological role, receptor for retinoic acid that acts as a transcription factor. Forms homo- or heterodimers with retinoic acid receptors (RARs) and binds to target response elements in response to their ligands, all-trans or 9-cis retinoic acid, to regulate gene expression in various biological processes. The RAR/RXR heterodimers bind to the retinoic acid response elements (RARE) composed of tandem 5'-AGGTCA-3' sites known as DR1-DR5 to regulate transcription. The high affinity ligand for retinoid X receptors (RXRs) is 9-cis retinoic acid. In the absence of ligand, the RXR-RAR heterodimers associate with a multiprotein complex containing transcription corepressors that induce histone deacetylation, chromatin condensation and transcriptional suppression. On ligand binding, the corepressors dissociate from the receptors and coactivators are recruited leading to transcriptional activation. Serves as a common heterodimeric partner for a number of nuclear receptors, such as RARA, RARB and PPARA. The RXRA/RARB heterodimer can act as a transcriptional repressor or transcriptional activator, depending on the RARE DNA element context. The RXRA/PPARA heterodimer is required for PPARA transcriptional activity on fatty acid oxidation genes such as ACOX1 and the P450 system genes. Together with RARA, positively regulates microRNA-10a expression, thereby inhibiting the GATA6/VCAM1 signaling response to pulsatile shear stress in vascular endothelial cells. Acts as an enhancer of RARA binding to RARE DNA element. May facilitate the nuclear import of heterodimerization partners such as VDR and NR4A1. Promotes myelin debris phagocytosis and remyelination by macrophages. Plays a role in the attenuation of the innate immune system in response to viral infections, possibly by negatively regulating the transcription of antiviral genes such as type I IFN genes. Involved in the regulation of calcium signaling by repressing ITPR2 gene expression, thereby controlling cellular senescence. The polypeptide is Retinoic acid receptor RXR-alpha (Rxra) (Mus musculus (Mouse)).